The following is a 531-amino-acid chain: Bifunctional protein TrpGD (531 aa).

The 194-residue stretch at 3–196 (DILLLDNIDS…LAWAQQKLEP (194 aa)) folds into the Glutamine amidotransferase type-1 domain. 57-59 (GPG) lines the L-glutamine pocket. C84 functions as the Nucleophile; for GATase activity in the catalytic mechanism. L-glutamine contacts are provided by residues Q88 and 134–135 (SL). Active-site for GATase activity residues include H170 and E172. The interval 202–531 (PILEKLYQAQ…DRVTALAARG (330 aa)) is anthranilate phosphoribosyltransferase.

It in the C-terminal section; belongs to the anthranilate phosphoribosyltransferase family. Monomer. Heterotetramer consisting of two non-identical subunits: a beta subunit (TrpG) and a large alpha subunit (TrpE).

It carries out the reaction chorismate + L-glutamine = anthranilate + pyruvate + L-glutamate + H(+). It catalyses the reaction N-(5-phospho-beta-D-ribosyl)anthranilate + diphosphate = 5-phospho-alpha-D-ribose 1-diphosphate + anthranilate. Its pathway is amino-acid biosynthesis; L-tryptophan biosynthesis; L-tryptophan from chorismate: step 1/5. The protein operates within amino-acid biosynthesis; L-tryptophan biosynthesis; L-tryptophan from chorismate: step 2/5. With respect to regulation, cooperatively feedback inhibited by tryptophan. Functionally, part of a heterotetrameric complex that catalyzes the two-step biosynthesis of anthranilate, an intermediate in the biosynthesis of L-tryptophan. In the first step, the glutamine-binding beta subunit (TrpG) of anthranilate synthase (AS) provides the glutamine amidotransferase activity which generates ammonia as a substrate that, along with chorismate, is used in the second step, catalyzed by the large alpha subunit of AS (TrpE) to produce anthranilate. In the absence of TrpG, TrpE can synthesize anthranilate directly from chorismate and high concentrations of ammonia. In addition to synthesizing anthranilate, it also catalyzes the second step of the pathway, the transfer of the phosphoribosyl group of 5-phosphorylribose-1-pyrophosphate (PRPP) to anthranilate. In Salmonella typhimurium (strain LT2 / SGSC1412 / ATCC 700720), this protein is Bifunctional protein TrpGD (trpGD).